Here is a 495-residue protein sequence, read N- to C-terminus: Germacrene A acid 8-beta-hydroxylase (495 aa).

The chain crosses the membrane as a helical; Signal-anchor for type II membrane protein span at residues 3 to 23; sequence PFTTFSLVASSLILLICWALV. The N-linked (GlcNAc...) asparagine glycan is linked to asparagine 103. Cysteine 433 contributes to the heme binding site.

This sequence belongs to the cytochrome P450 family. Heme serves as cofactor. In terms of tissue distribution, mostly expressed in leaves and flowers, and, to a lower extent, in roots and stems.

It localises to the membrane. It catalyses the reaction germacra-1(10),4,11(13)-trien-12-oate + reduced [NADPH--hemoprotein reductase] + O2 = 8beta-hydroxygermacra-1(10),4,11(13)-trien-12-oate + oxidized [NADPH--hemoprotein reductase] + H2O + H(+). The enzyme catalyses germacra-1(10),4,11(13)-trien-12-oate + reduced [NADPH--hemoprotein reductase] + O2 = 8-epi-inunolide + oxidized [NADPH--hemoprotein reductase] + 2 H2O. It carries out the reaction germacra-1(10),4,11(13)-trien-12-oate + reduced [NADPH--hemoprotein reductase] + O2 = 8alpha-hydroxygermacra-1(10),4,11(13)-trien-12-oate + oxidized [NADPH--hemoprotein reductase] + H2O + H(+). It participates in secondary metabolite biosynthesis; terpenoid biosynthesis. In terms of biological role, involved in the biosynthesis of germacrene-derived sesquiterpene lactones. Hydroxylates germacrene A acid to 8-beta-hydroxy-germacrene A and 8-alpha-hydroxy-germacrene A acids. Unlike 8-alpha-hydroxy-germacrene A acid with is spontaneously converted into inunolide (12, 8-alpha), 8-beta-hydroxy-germacrene A cannot undergo spontaneous lactonization. The polypeptide is Germacrene A acid 8-beta-hydroxylase (Inula hupehensis (Inula helianthus-aquatilis subsp. hupehensis)).